Reading from the N-terminus, the 739-residue chain is G2 and S phase-expressed protein 1 (739 aa).

The segment covering 1–11 (MEGGGGRDEPS) has biased composition (basic and acidic residues). The segment at 1-20 (MEGGGGRDEPSACRAGDVNM) is disordered. Phosphoserine is present on Ser91. 3 disordered regions span residues 116–136 (SRNQAAQAAKPEDPRSQGVER), 149–306 (EKEK…AIPV), and 320–639 (PGST…GDAA). Basic and acidic residues predominate over residues 149–165 (EKEKEMKKSPTSLKRET). Ser157 carries the phosphoserine modification. A Phosphothreonine modification is found at Thr159. Residues Ser171, Ser187, Ser208, Ser247, and Ser262 each carry the phosphoserine modification. A compositionally biased stretch (low complexity) spans 181–195 (PRLLASSPALPSSGA). The span at 268–280 (IPAEKESHRDVLP) shows a compositional bias: basic and acidic residues. Low complexity-rich tracts occupy residues 284-294 (APGAVNVPAAG) and 330-342 (SSSGPVWSGASSA). Ser331 is modified (phosphoserine). Positions 360–372 (PANSSRPLSNISK) are enriched in polar residues. A compositionally biased stretch (low complexity) spans 411–424 (TAPPSASPTQPQTP). 2 stretches are compositionally biased toward polar residues: residues 430–446 (WLNSSCAWSESSQLNKT) and 455–470 (CLNSKTKVMPTPTNQF). Ser480 is modified (phosphoserine). The span at 481 to 522 (PDSSTPKLSRAQRPQSCTSVGRVTVHSTPVRRSSGPAPQSLL) shows a compositional bias: polar residues. Thr485 is modified (phosphothreonine). Residues Ser496, Ser499, Ser514, Ser520, Ser523, and Ser528 each carry the phosphoserine modification. Thr532 is subject to Phosphothreonine. Phosphoserine occurs at positions 535 and 555. A compositionally biased stretch (basic and acidic residues) spans 577–590 (EPTRESNRKTDSRL). 2 positions are modified to phosphoserine: Ser594 and Ser611. Thr696 carries the phosphothreonine modification. Phosphoserine occurs at positions 707, 717, 718, 724, and 734.

Post-translationally, phosphorylated in mitosis.

Its subcellular location is the cytoplasm. It is found in the cytoskeleton. Its function is as follows. May be involved in p53-induced cell cycle arrest in G2/M phase by interfering with microtubule rearrangements that are required to enter mitosis. Overexpression delays G2/M phase progression. The polypeptide is G2 and S phase-expressed protein 1 (Homo sapiens (Human)).